The primary structure comprises 317 residues: RHOMBOID-like protein 2 (317 aa).

Transmembrane regions (helical) follow at residues 33–53 (SWLI…VMFV), 118–138 (WLHA…FIGI), 149–169 (VGLI…LFLQ), 172–192 (ISVG…SELL), 202–222 (AAAL…GMLP), 224–244 (VDNF…FVLL), and 272–292 (LFVV…VMLF). Ser-177 serves as the catalytic Nucleophile. His-229 acts as the Charge relay system in catalysis.

Belongs to the peptidase S54 family. As to expression, expressed in roots, seedlings, leaves, stems and flowers.

It is found in the golgi apparatus membrane. The enzyme catalyses Cleaves type-1 transmembrane domains using a catalytic dyad composed of serine and histidine that are contributed by different transmembrane domains.. Functionally, rhomboid-type serine protease that catalyzes intramembrane proteolysis. Can cleave the Drosophila proteins Spitz and Keren. May function in pollen elongation. The sequence is that of RHOMBOID-like protein 2 from Arabidopsis thaliana (Mouse-ear cress).